A 469-amino-acid polypeptide reads, in one-letter code: MNTNQRIITIGTICLIVGIISLLLQIGNIISLWISHSIQTREKSHPEVCNQSIITYENNTWVNQTYVNISNANIVAEQGVTSIILAGNSSLCPISGWAIYSKDNSIRIGSKGDIFVIREPFISCSHLECRTFFLTQGALLNDRHSNGTVKDRSPYRTLMSCPIGEAPSPYNSRFESVAWSASACHDGMGWLTIGISGPDNGAVAVLKYNGIITDTIKSWRNKILRTQESECVCINGSCFTIMTDGPSNGQASYKIFKMEKGRIIKSIELDAPNYHYEECSCYPDTGKVVCVCRDNWHASNRPWVSFDQNLDYQIGYICSGVFGDNPRSNDGKGNCGPVLSNGANGVKGFSFRYGNGVWIGRTKSISSRSGFEMIWDPNGWTETDSSFSMKQDIIALTDWSGYSGSFVQHPELTGMDCIRPCFWVELIRGQPKENTIWTSGSSISFCGVNSGTANWSWPDGADLPFTIDK.

The Intravirion segment spans residues 1–6 (MNTNQR). A helical membrane pass occupies residues 7 to 27 (IITIGTICLIVGIISLLLQIG). An involved in apical transport and lipid raft association region spans residues 11–33 (GTICLIVGIISLLLQIGNIISLW). The Virion surface segment spans residues 28–469 (NIISLWISHS…GADLPFTIDK (442 aa)). The hypervariable stalk region stretch occupies residues 36–90 (HSIQTREKSHPEVCNQSIITYENNTWVNQTYVNISNANIVAEQGVTSIILAGNSS). N-linked (GlcNAc...) asparagine; by host glycosylation is found at N50, N58, N63, N68, and N88. Residues 91–469 (LCPISGWAIY…GADLPFTIDK (379 aa)) are head of neuraminidase. 8 disulfide bridges follow: C92–C417, C124–C129, C184–C231, C233–C238, C279–C292, C281–C290, C318–C335, and C421–C446. R118 contacts substrate. A glycan (N-linked (GlcNAc...) asparagine; by host) is linked at N146. The active-site Proton donor/acceptor is the D151. R152 is a substrate binding site. An N-linked (GlcNAc...) asparagine; by host glycan is attached at N235. 277 to 278 (EE) provides a ligand contact to substrate. R293 contacts substrate. Ca(2+) contacts are provided by D294, D324, and N344. A substrate-binding site is contributed by R368. The Nucleophile role is filled by Y402. N454 carries an N-linked (GlcNAc...) asparagine; by host glycan.

This sequence belongs to the glycosyl hydrolase 34 family. In terms of assembly, homotetramer. It depends on Ca(2+) as a cofactor. Post-translationally, N-glycosylated.

The protein localises to the virion membrane. Its subcellular location is the host apical cell membrane. It carries out the reaction Hydrolysis of alpha-(2-&gt;3)-, alpha-(2-&gt;6)-, alpha-(2-&gt;8)- glycosidic linkages of terminal sialic acid residues in oligosaccharides, glycoproteins, glycolipids, colominic acid and synthetic substrates.. Inhibited by the neuraminidase inhibitors zanamivir (Relenza) and oseltamivir (Tamiflu). These drugs interfere with the release of progeny virus from infected cells and are effective against all influenza strains. Resistance to neuraminidase inhibitors is quite rare. In terms of biological role, catalyzes the removal of terminal sialic acid residues from viral and cellular glycoconjugates. Cleaves off the terminal sialic acids on the glycosylated HA during virus budding to facilitate virus release. Additionally helps virus spread through the circulation by further removing sialic acids from the cell surface. These cleavages prevent self-aggregation and ensure the efficient spread of the progeny virus from cell to cell. Otherwise, infection would be limited to one round of replication. Described as a receptor-destroying enzyme because it cleaves a terminal sialic acid from the cellular receptors. May facilitate viral invasion of the upper airways by cleaving the sialic acid moieties on the mucin of the airway epithelial cells. Likely to plays a role in the budding process through its association with lipid rafts during intracellular transport. May additionally display a raft-association independent effect on budding. Plays a role in the determination of host range restriction on replication and virulence. Sialidase activity in late endosome/lysosome traffic seems to enhance virus replication. The chain is Neuraminidase from Aves (Human).